The primary structure comprises 399 residues: Lipoyl synthase, mitochondrial (399 aa).

Residues 1 to 30 (MRAVLELTRRRARNARFARARAVVGARARA) constitute a mitochondrion transit peptide. Positions 31–41 (ADAQELRDDSK) are enriched in basic and acidic residues. Residues 31-58 (ADAQELRDDSKGGSSVDKATSTAAEARE) form a disordered region. [4Fe-4S] cluster is bound by residues Cys131, Cys136, Cys142, Cys162, Cys166, Cys169, and Ser375. The 220-residue stretch at 145 to 364 (GGDGKTATAT…QEIAEEMGFL (220 aa)) folds into the Radical SAM core domain.

It belongs to the radical SAM superfamily. Lipoyl synthase family. [4Fe-4S] cluster is required as a cofactor.

The protein localises to the mitochondrion. The catalysed reaction is [[Fe-S] cluster scaffold protein carrying a second [4Fe-4S](2+) cluster] + N(6)-octanoyl-L-lysyl-[protein] + 2 oxidized [2Fe-2S]-[ferredoxin] + 2 S-adenosyl-L-methionine + 4 H(+) = [[Fe-S] cluster scaffold protein] + N(6)-[(R)-dihydrolipoyl]-L-lysyl-[protein] + 4 Fe(3+) + 2 hydrogen sulfide + 2 5'-deoxyadenosine + 2 L-methionine + 2 reduced [2Fe-2S]-[ferredoxin]. The protein operates within protein modification; protein lipoylation via endogenous pathway; protein N(6)-(lipoyl)lysine from octanoyl-[acyl-carrier-protein]: step 2/2. In terms of biological role, catalyzes the radical-mediated insertion of two sulfur atoms into the C-6 and C-8 positions of the octanoyl moiety bound to the lipoyl domains of lipoate-dependent enzymes, thereby converting the octanoylated domains into lipoylated derivatives. The polypeptide is Lipoyl synthase, mitochondrial (Ostreococcus lucimarinus (strain CCE9901)).